Consider the following 527-residue polypeptide: Butyrophilin subfamily 2 member A1 (527 aa).

An N-terminal signal peptide occupies residues 1–28; it reads MESAAALHFSRPASLLLLLLSLCALVSA. Positions 29–141 constitute an Ig-like V-type domain; it reads QFIVVGPTDP…SYDEAILHLV (113 aa). The Extracellular segment spans residues 29–248; that stretch reads QFIVVGPTDP…SFMPSVSPCA (220 aa). Asn46, Asn114, and Asn120 each carry an N-linked (GlcNAc...) asparagine glycan. A disulfide bond links Cys51 and Cys125. A helical transmembrane segment spans residues 249-269; that stretch reads VALPIIVVILMIPIAVCIYWI. The Cytoplasmic portion of the chain corresponds to 270 to 527; the sequence is NKLQKEKKIL…LHRVGTHQSL (258 aa). Positions 310–506 constitute a B30.2/SPRY domain; sequence VKEKLQEELR…IFICPALTGA (197 aa).

It belongs to the immunoglobulin superfamily. BTN/MOG family. As to expression, highly expressed in brain, bone marrow, small intestine, muscle, spleen and pancreas. Moderate expression was seen in lung, liver and kidney.

It localises to the membrane. This chain is Butyrophilin subfamily 2 member A1 (BTN2A1), found in Homo sapiens (Human).